A 250-amino-acid polypeptide reads, in one-letter code: Flavin-dependent thymidylate synthase (250 aa).

The ThyX domain occupies 7–233; that stretch reads LRVQLIAKTD…PSIFGDFDIA (227 aa). Residues Ser-71, 95–97, and Gln-103 each bind FAD; that span reads RHR. DUMP is bound by residues 92 to 95, 103 to 107, and Arg-172; these read ELIR and QLSQR. The short motif at 95–105 is the ThyX motif element; that stretch reads RHRHFSYSQLS. FAD contacts are provided by residues 188–190 and His-194; that span reads NYR. Arg-199 contacts dUMP. Residue Arg-199 is the Involved in ionization of N3 of dUMP, leading to its activation of the active site.

The protein belongs to the thymidylate synthase ThyX family. Homotetramer. The cofactor is FAD.

It carries out the reaction dUMP + (6R)-5,10-methylene-5,6,7,8-tetrahydrofolate + NADPH + H(+) = dTMP + (6S)-5,6,7,8-tetrahydrofolate + NADP(+). It functions in the pathway pyrimidine metabolism; dTTP biosynthesis. In terms of biological role, catalyzes the reductive methylation of 2'-deoxyuridine-5'-monophosphate (dUMP) to 2'-deoxythymidine-5'-monophosphate (dTMP) while utilizing 5,10-methylenetetrahydrofolate (mTHF) as the methyl donor, and NADPH and FADH(2) as the reductant. This Mycobacteroides abscessus (strain ATCC 19977 / DSM 44196 / CCUG 20993 / CIP 104536 / JCM 13569 / NCTC 13031 / TMC 1543 / L948) (Mycobacterium abscessus) protein is Flavin-dependent thymidylate synthase.